Consider the following 1070-residue polypeptide: MLGVGNEGMSTLPGLNQIQFEGFCRFIDRGLTEELFKFPKIEDTDQEIEFQLFVETYQLVEPSIKEKDAVYESLTYSSELYVSAGLIWKNSKNIQEQTIFIGNIPLMNSLGTSIVNGIYRIVINQILQSPGIYYQSELDHKGISVYTGTIISDWGGRLELEIDRKARIWARVSRKQKISILVLSSAMGSNLNEILENVCYPEIFLSFLNDKEEKKIGSKESAILEFYRQFACVGGDPVFPESLCRELQKKFFQQRCELGEIGRRNMNRRLNLDIPQNNTFLLPRDILTAADHLIGMKFRMGTLDDMNHLKNKRIRSVADLLQDQFGLALVRLENMVRGTICGAIRYKLIPTPQNLVTSTPLTTTYESFFGLHPLSQVLDRTNPLTQIVHGRKLSYLGPGGLTGRTASFRIRDIHSSHYGRICPIDTSEGINVGLIGSLAIHARIGRWGSIESPFFEISERSKRIHMLYLSPSRDEYYMIATGNYLALNQGNQEEQIVPARYRQEFLTIAWEQVHLRSIFSFQYFSIGASLIPFIEHNDANRALMSSNMQRQAVPLSQSEKCIVGTGLERQVALDSGTLAIAEHEGKIIYKDTNKIVLFGSGETLSVPLVIYRRSNKNTCMHQKSQVQRGKCIKRGQILADGAATVGGELSLGKNVLVAYMPWEGYNSEDAVLISDRLVYEDIYTSFHIRKYEIQTHVTSNGPERITNKIPHLEVHLLRNLDKNGLVILGSWVEAGDILVGKLTPQMAKESSYAPEDRLLRAILGIQVSTSKETCLKLPIGGRGRVIDVRWLHKKGGSGYNPETIHIYILQKREIKVGDKVAGRHGNKGIVSKILARQDMPYLQDGRPVDMVFNPLGVPSRMNVGQIFECSLGLAGDVLDRHYRIAPFDERYEQEASRKLVFSELYQASKQTSNPWIFEPEYPGKSRIFDGRTGTPFEQPVIIGNPYILKLIHQVDDKIHGRSSGHYALVTQQPLKGRAKQGGQRVGEMEVWALEGFGVAHILQEMLTYKSDHIKARQEVLGTTIIGGTISKPVDAPESFRLLVRELRSLALELNHFLVSEKNFRIHRKEV.

It belongs to the RNA polymerase beta chain family. As to quaternary structure, in plastids the minimal PEP RNA polymerase catalytic core is composed of four subunits: alpha, beta, beta', and beta''. When a (nuclear-encoded) sigma factor is associated with the core the holoenzyme is formed, which can initiate transcription.

The protein resides in the plastid. It is found in the chloroplast. It catalyses the reaction RNA(n) + a ribonucleoside 5'-triphosphate = RNA(n+1) + diphosphate. Its function is as follows. DNA-dependent RNA polymerase catalyzes the transcription of DNA into RNA using the four ribonucleoside triphosphates as substrates. The polypeptide is DNA-directed RNA polymerase subunit beta (Lotus japonicus (Lotus corniculatus var. japonicus)).